A 997-amino-acid polypeptide reads, in one-letter code: Sorting nexin-19 (997 aa).

The PXA domain maps to 95-273 (ERQLEQEINR…ILVSIFSKYR (179 aa)). Disordered stretches follow at residues 313-333 (SSPA…SPEI) and 413-437 (GALE…APGT). A compositionally biased stretch (acidic residues) spans 422-435 (GSECMEGAEAEEAP). The PX domain occupies 538–668 (LRITGTITAR…EFLALNTDAR (131 aa)). A 1,2-diacyl-sn-glycero-3-phospho-(1D-myo-inositol-3-phosphate)-binding residues include Arg-587 and Arg-634. Residues 697–728 (FPRSEPQSPTEELSEAENESKPQTEGKKASKS) are disordered. A compositionally biased stretch (basic and acidic residues) spans 714-724 (NESKPQTEGKK).

This sequence belongs to the sorting nexin family. Interacts with PTPRN.

The protein localises to the early endosome membrane. It localises to the cytoplasmic vesicle membrane. Its function is as follows. Plays a role in intracellular vesicle trafficking and exocytosis. May play a role in maintaining insulin-containing dense core vesicles in pancreatic beta-cells and in preventing their degradation. May play a role in insulin secretion. Interacts with membranes containing phosphatidylinositol 3-phosphate (PtdIns(3P)). The protein is Sorting nexin-19 of Mus musculus (Mouse).